The following is a 670-amino-acid chain: Acetyl-coenzyme A synthetase (670 aa).

CoA-binding positions include 205-208 (RRGR) and T326. Residues 402-404 (GEP), 426-431 (STWWMT), D517, R532, and R543 each bind ATP. Mg(2+) is bound by residues H556 and V559. R601 lines the CoA pocket. The residue at position 626 (K626) is an N6-acetyllysine.

It belongs to the ATP-dependent AMP-binding enzyme family. Requires Mg(2+) as cofactor. Acetylated. Deacetylation by the SIR2-homolog deacetylase activates the enzyme.

It catalyses the reaction acetate + ATP + CoA = acetyl-CoA + AMP + diphosphate. In terms of biological role, catalyzes the conversion of acetate into acetyl-CoA (AcCoA), an essential intermediate at the junction of anabolic and catabolic pathways. AcsA undergoes a two-step reaction. In the first half reaction, AcsA combines acetate with ATP to form acetyl-adenylate (AcAMP) intermediate. In the second half reaction, it can then transfer the acetyl group from AcAMP to the sulfhydryl group of CoA, forming the product AcCoA. This Pyrobaculum aerophilum (strain ATCC 51768 / DSM 7523 / JCM 9630 / CIP 104966 / NBRC 100827 / IM2) protein is Acetyl-coenzyme A synthetase.